The chain runs to 146 residues: D-aminoacyl-tRNA deacylase (146 aa).

The Gly-cisPro motif, important for rejection of L-amino acids motif lies at 138–139 (GP).

Belongs to the DTD family. As to quaternary structure, homodimer.

It is found in the cytoplasm. The enzyme catalyses glycyl-tRNA(Ala) + H2O = tRNA(Ala) + glycine + H(+). It carries out the reaction a D-aminoacyl-tRNA + H2O = a tRNA + a D-alpha-amino acid + H(+). Functionally, an aminoacyl-tRNA editing enzyme that deacylates mischarged D-aminoacyl-tRNAs. Also deacylates mischarged glycyl-tRNA(Ala), protecting cells against glycine mischarging by AlaRS. Acts via tRNA-based rather than protein-based catalysis; rejects L-amino acids rather than detecting D-amino acids in the active site. By recycling D-aminoacyl-tRNA to D-amino acids and free tRNA molecules, this enzyme counteracts the toxicity associated with the formation of D-aminoacyl-tRNA entities in vivo and helps enforce protein L-homochirality. This Xanthomonas axonopodis pv. citri (strain 306) protein is D-aminoacyl-tRNA deacylase.